A 417-amino-acid chain; its full sequence is Serine--tRNA ligase (417 aa).

226–228 (TSE) is a binding site for L-serine. ATP contacts are provided by residues 257 to 259 (RRE) and V273. L-serine is bound at residue E280. 344–347 (ELTS) provides a ligand contact to ATP. T379 provides a ligand contact to L-serine.

It belongs to the class-II aminoacyl-tRNA synthetase family. Type-1 seryl-tRNA synthetase subfamily. In terms of assembly, homodimer. The tRNA molecule binds across the dimer.

It is found in the cytoplasm. The enzyme catalyses tRNA(Ser) + L-serine + ATP = L-seryl-tRNA(Ser) + AMP + diphosphate + H(+). It carries out the reaction tRNA(Sec) + L-serine + ATP = L-seryl-tRNA(Sec) + AMP + diphosphate + H(+). The protein operates within aminoacyl-tRNA biosynthesis; selenocysteinyl-tRNA(Sec) biosynthesis; L-seryl-tRNA(Sec) from L-serine and tRNA(Sec): step 1/1. Catalyzes the attachment of serine to tRNA(Ser). Is also able to aminoacylate tRNA(Sec) with serine, to form the misacylated tRNA L-seryl-tRNA(Sec), which will be further converted into selenocysteinyl-tRNA(Sec). In Mycobacterium sp. (strain JLS), this protein is Serine--tRNA ligase.